The following is a 312-amino-acid chain: GDSL esterase/lipase At2g38180 (312 aa).

A signal peptide spans methionine 1 to threonine 22. N-linked (GlcNAc...) asparagine glycosylation is present at asparagine 79. Residues glutamate 285–leucine 312 form a disordered region.

The protein belongs to the 'GDSL' lipolytic enzyme family.

The protein localises to the secreted. This is GDSL esterase/lipase At2g38180 from Arabidopsis thaliana (Mouse-ear cress).